Consider the following 395-residue polypeptide: THAP domain-containing protein 5 (395 aa).

The segment at 1-84 adopts a THAP-type zinc-finger fold; sequence MPRYCAAICC…LKQTAVPTIF (84 aa). The interval 85–112 is disordered; that stretch reads SLPEDNQGKDPSKKKSQKKNLEDEKEVC. Residues 90-112 are compositionally biased toward basic and acidic residues; it reads NQGKDPSKKKSQKKNLEDEKEVC. Positions 321 to 324 match the HCFC1-binding motif (HBM) motif; it reads EHSY. The stretch at 348 to 382 forms a coiled coil; it reads LELKEQQTLGRLKSLEALIRQLKQENWLSEENVKI.

As to quaternary structure, interacts with HTRA2; under apoptotic conditions. Interacts with ABRAXAS2. In terms of processing, cleaved by HTRA2 during apoptosis. Detected in heart. Detected in brain and muscle (at protein level). Highly expressed in the heart. Also found in brain and skeletal muscle.

The protein localises to the nucleus. Functionally, has sequence-specific DNA-binding activity and can function as transcriptional repressor (in vitro). May be a regulator of cell cycle: THAP5 overexpression in human cell lines causes cell cycle arrest at G2/M phase. The chain is THAP domain-containing protein 5 (THAP5) from Homo sapiens (Human).